Consider the following 361-residue polypeptide: Transcription factor TCP10 (361 aa).

The TCP domain maps to 29 to 87; the sequence is RKDRHSKVFTSKGPRDRRVRLSAHTAIQFYDVQDRLGYDRPSKAVDWLIKKAKTAIDKL. Disordered regions lie at residues 220-259 and 295-317; these read DLTM…QPSM and SWDH…SMFA. A compositionally biased stretch (basic and acidic residues) spans 295–304; it reads SWDHHQTTSD.

As to quaternary structure, interacts with AHP1, AHP2 and AHP3. Interacts with SPL. In terms of tissue distribution, mostly detected in lateral organs, such as leaves and flowers. Expressed in cotyledons, particularly in the vascular region, in leaves, roots, stems, buds, flowers and immature siliques.

The protein localises to the nucleus. In terms of biological role, plays a pivotal role in the control of morphogenesis of shoot organs by negatively regulating the expression of boundary-specific genes such as CUC genes, probably through the induction of miRNA (e.g. miR164). Participates in ovule development. The sequence is that of Transcription factor TCP10 (TCP10) from Arabidopsis thaliana (Mouse-ear cress).